A 430-amino-acid chain; its full sequence is UDP-N-acetylmuramoylalanine--D-glutamate ligase (430 aa).

An ATP-binding site is contributed by 109 to 115 (GTDGKST).

Belongs to the MurCDEF family.

It localises to the cytoplasm. The enzyme catalyses UDP-N-acetyl-alpha-D-muramoyl-L-alanine + D-glutamate + ATP = UDP-N-acetyl-alpha-D-muramoyl-L-alanyl-D-glutamate + ADP + phosphate + H(+). Its pathway is cell wall biogenesis; peptidoglycan biosynthesis. Functionally, cell wall formation. Catalyzes the addition of glutamate to the nucleotide precursor UDP-N-acetylmuramoyl-L-alanine (UMA). In Thermotoga petrophila (strain ATCC BAA-488 / DSM 13995 / JCM 10881 / RKU-1), this protein is UDP-N-acetylmuramoylalanine--D-glutamate ligase.